The sequence spans 180 residues: Ubiquitin-conjugating enzyme E2 20 (180 aa).

The interval 1-33 (MAAVNGYQGNTPADPPASNGSKQPAAPTKTVDS) is disordered. A UBC core domain is found at 35–180 (SVLKRLQSEL…VEKLYKPPSA (146 aa)). Cys-119 functions as the Glycyl thioester intermediate in the catalytic mechanism.

Belongs to the ubiquitin-conjugating enzyme family. As to expression, expressed in all tissues with cell division activities and in mature leaves.

It catalyses the reaction S-ubiquitinyl-[E1 ubiquitin-activating enzyme]-L-cysteine + [E2 ubiquitin-conjugating enzyme]-L-cysteine = [E1 ubiquitin-activating enzyme]-L-cysteine + S-ubiquitinyl-[E2 ubiquitin-conjugating enzyme]-L-cysteine.. The protein operates within protein modification; protein ubiquitination. Functionally, accepts the ubiquitin from the E1 complex and catalyzes its covalent attachment to other proteins. This Arabidopsis thaliana (Mouse-ear cress) protein is Ubiquitin-conjugating enzyme E2 20 (UBC20).